The chain runs to 169 residues: Putative lipocalin R877 (169 aa).

The N-terminal stretch at methionine 1–serine 18 is a signal peptide.

It belongs to the calycin superfamily. Lipocalin family.

It localises to the secreted. The protein resides in the virion. Could play a role in the transport of a small ligand. This Acanthamoeba polyphaga mimivirus (APMV) protein is Putative lipocalin R877.